The following is a 318-amino-acid chain: Protein-methionine-sulfoxide reductase catalytic subunit MsrP (318 aa).

A signal peptide (tat-type signal) is located at residues 1-40 (MNRFTRYDVTPEAIFNQRRQIIKAMGLGAAALSLPNIGFA). Mo-molybdopterin contacts are provided by residues N72, 75 to 76 (YE), C130, T165, N217, R222, and 233 to 235 (SIK).

The protein belongs to the MsrP family. Heterodimer of a catalytic subunit (MsrP) and a heme-binding subunit (MsrQ). Requires Mo-molybdopterin as cofactor. Predicted to be exported by the Tat system. The position of the signal peptide cleavage has not been experimentally proven.

Its subcellular location is the periplasm. It carries out the reaction L-methionyl-[protein] + a quinone + H2O = L-methionyl-(S)-S-oxide-[protein] + a quinol. The catalysed reaction is L-methionyl-[protein] + a quinone + H2O = L-methionyl-(R)-S-oxide-[protein] + a quinol. In terms of biological role, part of the MsrPQ system that repairs oxidized periplasmic proteins containing methionine sulfoxide residues (Met-O), using respiratory chain electrons. Thus protects these proteins from oxidative-stress damage caused by reactive species of oxygen and chlorine generated by the host defense mechanisms. MsrPQ is essential for the maintenance of envelope integrity under bleach stress, rescuing a wide series of structurally unrelated periplasmic proteins from methionine oxidation. The catalytic subunit MsrP is non-stereospecific, being able to reduce both (R-) and (S-) diastereoisomers of methionine sulfoxide. In Actinobacillus pleuropneumoniae serotype 5b (strain L20), this protein is Protein-methionine-sulfoxide reductase catalytic subunit MsrP.